The sequence spans 483 residues: RNA-binding protein Nova-1 (483 aa).

The segment at 1 to 44 (MMAAAPIQQNGTHTGVPIDLDPPDSRKRPLEAPPEAGSTKRTNT) is disordered. A Bipartite nuclear localization signal motif is present at residues 27–43 (KRPLEAPPEAGSTKRTN). KH domains follow at residues 49-116 (QYFL…HGFI), 147-213 (IKQV…VELI), and 397-464 (KDVV…QYLI). The required for RNA binding stretch occupies residues 395 to 479 (GSKDVVEIAV…YEQGVRAANP (85 aa)).

Interacts with PTBP2; the interaction is direct.

Its subcellular location is the nucleus. In terms of biological role, functions to regulate alternative splicing in neurons by binding pre-mRNA in a sequence-specific manner to activate exon inclusion or exclusion. It binds specifically to the sequences 5'-YCAY-3' and regulates splicing in only a subset of regulated exons. Binding to an exonic 5'-YCAY-3' cluster changes the protein complexes assembled on pre-mRNA, blocking U1 snRNP binding and exon inclusion, whereas binding to an intronic 5'-YCAY-3' cluster enhances spliceosome assembly and exon inclusion. Binding to 5'-YCAY-3' clusters results in a local and asymmetric action to regulate spliceosome assembly and alternative splicing in neurons. Binding to an exonic 5'-YCAY-3' cluster changed the protein complexes assembled on pre-mRNA, blocking U1 snRNP (small nuclear ribonucleoprotein) binding and exon inclusion, whereas binding to an intronic 5'-YCAY-3' cluster enhanced spliceosome assembly and exon inclusion. With NOVA1, they perform unique biological functions in different brain areas and cell types. Autoregulates its own expression by acting as a splicing repressor. Acts to activate the inclusion of exon E3A in the glycine receptor alpha-2 chain and of exon E9 in gamma-aminobutyric-acid receptor gamma-2 subunit via a distal downstream UCAU-rich intronic splicing enhancer. Acts to regulate a novel glycine receptor alpha-2 chain splice variant (alpha-2N) in developing spinal cord. This Macaca fascicularis (Crab-eating macaque) protein is RNA-binding protein Nova-1 (NOVA1).